Reading from the N-terminus, the 517-residue chain is GMP synthase [glutamine-hydrolyzing] (517 aa).

Residues 9–199 (RILILDFGSQ…VLNVCGCEGL (191 aa)) enclose the Glutamine amidotransferase type-1 domain. Catalysis depends on Cys-86, which acts as the Nucleophile. Residues His-173 and Glu-175 contribute to the active site. The GMPS ATP-PPase domain occupies 200 to 392 (WTSASIIEDA…LGLPYNMLYR (193 aa)). Position 227–233 (227–233 (SGGVDSS)) interacts with ATP.

In terms of assembly, homodimer.

It catalyses the reaction XMP + L-glutamine + ATP + H2O = GMP + L-glutamate + AMP + diphosphate + 2 H(+). The protein operates within purine metabolism; GMP biosynthesis; GMP from XMP (L-Gln route): step 1/1. In terms of biological role, catalyzes the synthesis of GMP from XMP. This is GMP synthase [glutamine-hydrolyzing] from Aliivibrio salmonicida (strain LFI1238) (Vibrio salmonicida (strain LFI1238)).